Here is a 208-residue protein sequence, read N- to C-terminus: 3-demethoxyubiquinol 3-hydroxylase (208 aa).

E57, E87, H90, E139, E171, and H174 together coordinate Fe cation.

The protein belongs to the COQ7 family. It depends on Fe cation as a cofactor.

The protein localises to the cell membrane. The catalysed reaction is a 5-methoxy-2-methyl-3-(all-trans-polyprenyl)benzene-1,4-diol + AH2 + O2 = a 3-demethylubiquinol + A + H2O. It functions in the pathway cofactor biosynthesis; ubiquinone biosynthesis. Functionally, catalyzes the hydroxylation of 2-nonaprenyl-3-methyl-6-methoxy-1,4-benzoquinol during ubiquinone biosynthesis. The polypeptide is 3-demethoxyubiquinol 3-hydroxylase (Burkholderia ambifaria (strain ATCC BAA-244 / DSM 16087 / CCUG 44356 / LMG 19182 / AMMD) (Burkholderia cepacia (strain AMMD))).